The following is a 320-amino-acid chain: MSRAEFSYDFPHRHLLSVADLNPVDIQIIFERAAHHLATNRTPDKRSDVLRGLTVLNLFFEASTRTQGSFEMAGKRLGADVVNFAVAHSSASKGESLSDTARTLAAMKPDIMVVRHSATGAPQFLADHTGLAVVNAGDGMHEHPTQALLDSFTLSQHWGSVGGRRILIVGDILHSRVARSNIGLLNILGAEIRLCAPPTLLPSDVDQWGCDVFHDLDEALKGCDAVMALRQQRERMSGGFVPSEREFFHLFGLTHERLEVASPDVLVMHPGPMNRGVEIHTKLADDPERSVILEQVESGVAVRMAILELIGANIRKEASA.

Residues R65 and T66 each contribute to the carbamoyl phosphate site. Residue K93 coordinates L-aspartate. R115, H143, and Q146 together coordinate carbamoyl phosphate. L-aspartate contacts are provided by R176 and R230. Carbamoyl phosphate-binding residues include G271 and P272.

Belongs to the aspartate/ornithine carbamoyltransferase superfamily. ATCase family. As to quaternary structure, heterododecamer (2C3:3R2) of six catalytic PyrB chains organized as two trimers (C3), and six regulatory PyrI chains organized as three dimers (R2).

It catalyses the reaction carbamoyl phosphate + L-aspartate = N-carbamoyl-L-aspartate + phosphate + H(+). The protein operates within pyrimidine metabolism; UMP biosynthesis via de novo pathway; (S)-dihydroorotate from bicarbonate: step 2/3. Catalyzes the condensation of carbamoyl phosphate and aspartate to form carbamoyl aspartate and inorganic phosphate, the committed step in the de novo pyrimidine nucleotide biosynthesis pathway. This chain is Aspartate carbamoyltransferase catalytic subunit, found in Maricaulis maris (strain MCS10) (Caulobacter maris).